The chain runs to 386 residues: Bifunctional enzyme IspD/IspF (386 aa).

A 2-C-methyl-D-erythritol 4-phosphate cytidylyltransferase region spans residues 1 to 229 (MIRGERVIGI…RARALLEAPV (229 aa)). A 2-C-methyl-D-erythritol 2,4-cyclodiphosphate synthase region spans residues 230 to 386 (ATGVGYDTHR…AIALLVRAAG (157 aa)). A divalent metal cation contacts are provided by aspartate 236 and histidine 238. 4-CDP-2-C-methyl-D-erythritol 2-phosphate is bound by residues 236 to 238 (DTH) and 261 to 262 (HS). Histidine 269 is a binding site for a divalent metal cation. 4-CDP-2-C-methyl-D-erythritol 2-phosphate-binding positions include 283-285 (DLG), 288-292 (FPDTD), 359-362 (TTGE), phenylalanine 366, and arginine 369.

The protein in the N-terminal section; belongs to the IspD/TarI cytidylyltransferase family. IspD subfamily. In the C-terminal section; belongs to the IspF family. The cofactor is a divalent metal cation.

The enzyme catalyses 2-C-methyl-D-erythritol 4-phosphate + CTP + H(+) = 4-CDP-2-C-methyl-D-erythritol + diphosphate. The catalysed reaction is 4-CDP-2-C-methyl-D-erythritol 2-phosphate = 2-C-methyl-D-erythritol 2,4-cyclic diphosphate + CMP. Its pathway is isoprenoid biosynthesis; isopentenyl diphosphate biosynthesis via DXP pathway; isopentenyl diphosphate from 1-deoxy-D-xylulose 5-phosphate: step 2/6. It functions in the pathway isoprenoid biosynthesis; isopentenyl diphosphate biosynthesis via DXP pathway; isopentenyl diphosphate from 1-deoxy-D-xylulose 5-phosphate: step 4/6. Functionally, bifunctional enzyme that catalyzes the formation of 4-diphosphocytidyl-2-C-methyl-D-erythritol from CTP and 2-C-methyl-D-erythritol 4-phosphate (MEP) (IspD), and catalyzes the conversion of 4-diphosphocytidyl-2-C-methyl-D-erythritol 2-phosphate (CDP-ME2P) to 2-C-methyl-D-erythritol 2,4-cyclodiphosphate (ME-CPP) with a corresponding release of cytidine 5-monophosphate (CMP) (IspF). The polypeptide is Bifunctional enzyme IspD/IspF (Anaeromyxobacter dehalogenans (strain 2CP-C)).